We begin with the raw amino-acid sequence, 500 residues long: MSHHSSWRGHHCAPGDINCTAGFKESLGSRNYKLLHVPVHGPTHSHHHDPPHPFPTVDVPDHAHYIIGSVILIVGITGVIGNALVVYVFCRSRTLRTAGNMFIVNLAVADFLMSVTQSPVFFAASLHRRWVFGERPCELYAFCGALFGICSMMTLTAIAADRCLAITQPLALVSRVSRRKAGAVLVVVWLYSLGWSLPPFFGWSAYVPEGLQTSCSWDYMTFTPSVRAYTILLFVFVFFIPLGIIGSCYFAIFQTIRAAGKEIRELDCGETHKVYERMQNEWKMAKVALVVIVLFIISWSPYSVVALTATAGYSHFLTPYMNSVPAVIAKASAIHNPIIYAITHPKYRVAIARYIPVLRPILRVKEKDLRSSFSSGSVSSRRPTLTSQCSLGVSMGNAARANGRWGKTRLSSASDSDSCWTESEADGSSVSSLTFGRRVSTEISTDTVILSSGSSVSNASGQKSERAHKVISVPVPSITFETDAADGESLSDGKALLGGN.

At 1–65 (MSHHSSWRGH…TVDVPDHAHY (65 aa)) the chain is on the extracellular side. N-linked (GlcNAc...) asparagine glycosylation occurs at N18. A helical membrane pass occupies residues 66-86 (IIGSVILIVGITGVIGNALVV). Residues 87-101 (YVFCRSRTLRTAGNM) are Cytoplasmic-facing. A helical membrane pass occupies residues 102 to 122 (FIVNLAVADFLMSVTQSPVFF). Residues 123 to 138 (AASLHRRWVFGERPCE) lie on the Extracellular side of the membrane. An intrachain disulfide couples C137 to C215. The helical transmembrane segment at 139 to 159 (LYAFCGALFGICSMMTLTAIA) threads the bilayer. Topologically, residues 160–182 (ADRCLAITQPLALVSRVSRRKAG) are cytoplasmic. Residues 183 to 203 (AVLVVVWLYSLGWSLPPFFGW) form a helical membrane-spanning segment. Topologically, residues 204 to 232 (SAYVPEGLQTSCSWDYMTFTPSVRAYTIL) are extracellular. The chain crosses the membrane as a helical span at residues 233 to 253 (LFVFVFFIPLGIIGSCYFAIF). Residues 254–286 (QTIRAAGKEIRELDCGETHKVYERMQNEWKMAK) lie on the Cytoplasmic side of the membrane. A helical transmembrane segment spans residues 287–307 (VALVVIVLFIISWSPYSVVAL). The Extracellular segment spans residues 308 to 322 (TATAGYSHFLTPYMN). A helical membrane pass occupies residues 323–343 (SVPAVIAKASAIHNPIIYAIT). The residue at position 330 (K330) is an N6-(retinylidene)lysine. Residues 344-500 (HPKYRVAIAR…SDGKALLGGN (157 aa)) lie on the Cytoplasmic side of the membrane. Residues 404–428 (RWGKTRLSSASDSDSCWTESEADGS) form a disordered region. The segment covering 409–428 (RLSSASDSDSCWTESEADGS) has biased composition (polar residues).

It belongs to the G-protein coupled receptor 1 family. Opsin subfamily. As to expression, expressed in a subset of retinal horizontal cells.

It localises to the cell membrane. Functionally, photoreceptor implicated in non-image-forming responses to light. In Danio rerio (Zebrafish), this protein is Melanopsin-like (opn4l).